The following is a 517-amino-acid chain: FAD-dependent monooxygenase FUP4 (517 aa).

The signal sequence occupies residues 1–19; that stretch reads MRQSSTLTWTSVLLAPLAA. The region spanning 75 to 246 is the FAD-binding PCMH-type domain; the sequence is QALRPACLVH…TRFDLDLYDQ (172 aa). Pros-8alpha-FAD histidine is present on His112. N-linked (GlcNAc...) asparagine glycosylation is found at Asn163, Asn208, and Asn346.

Belongs to the oxygen-dependent FAD-linked oxidoreductase family. It depends on FAD as a cofactor.

It functions in the pathway secondary metabolite biosynthesis; terpenoid biosynthesis. In terms of biological role, FAD-dependent monooxygenase; part of the gene cluster that mediates the biosynthesis of the mycotoxin fusaproliferin (FUP) that belongs to the class of bicyclic sesterterpenoids. FUP4 catalyzes the oxidation of the hydroxy group at the C-16 position of preterpestacin III to a keto group, leading to the formation of (-)-terpestacin. The product of FUP1, preterpestacin I, might also serve as a substrate of FUP4 to yield oxo-preterpestacin I. The FUP biosynthetic pathway starts with the enzyme encoded by FUP1 that combines a C-terminal prenyltransferase domain responsible for the synthesis of geranylgeranyl diphosphate with the N-terminal terpene cyclase domain, to yield preterpestacin I. Preterpestacin I is then decorated by oxygenation steps that are catalyzed by two cytochrome P450 monooxygenases. First, FUP2 introduces a hydroxyl group at the C-24 position resulting in the formation of preterpestacin IIa. The second P450 monooxygenase catalyzes the hydroxylation at C-16 and C-17 of preterpestacin IIa, producing preterpestacin III. Subsequently, the FAD-dependent oxidoreductase FUP4 catalyzes the oxidation of the hydroxy group at the C-16 position to a keto group, leading to the formation of (-)-terpestacin, which is the immediate precursor of FUP. The final step in the proposed biosynthetic pathway is the addition of an acetyl group at the C-24 position of terpestacin, which is catalyzed by the acetyltransferase FUP5. In Fusarium proliferatum (strain ET1) (Orchid endophyte fungus), this protein is FAD-dependent monooxygenase FUP4.